The chain runs to 271 residues: Protein FAM110D (271 aa).

Residues 1–13 (MLLSSPTTPSRGR) are compositionally biased toward polar residues. Disordered regions lie at residues 1–84 (MLLS…PDSL), 118–149 (DAAP…TGKR), and 186–242 (PQSW…GRPT).

Belongs to the FAM110 family.

In Mus musculus (Mouse), this protein is Protein FAM110D.